Consider the following 95-residue polypeptide: uncharacterized protein (95 aa).

2 tandem repeats follow at residues 67–74 (GCGCGCGC) and 85–92 (CGGCCGCG). The tract at residues 67–92 (GCGCGCGCATVAAVSPVPCGGCCGCG) is 2 X 8 AA approximate repeats.

This is an uncharacterized protein from Caenorhabditis elegans.